Reading from the N-terminus, the 447-residue chain is MREIVHLQTGQCGNQIGAAFWQTISGEHGLDASGVYNGTSELQLERMNVYFNEASGNKYVPRAVLVDLEPGTMDAVRAGPFGQLFRPDNFVFGQSGAGNNWAKGHYTEGAELVDQVLDVVRREAEGCDCLQGFQITHSLGGGTGAGMGTLLISKIREEFPDRMMATFSVVPSPKVSDTVVEPYNATLSVHQLVENSDETFCIDNEALYDICMRTLKLSNPSYGDLNHLVSAVMSGVTVSLRFPGQLNSDLRKLAVNMVPFPRLHFFMVGFAPLTSRGAHHFRAVSVPELTQQMFDPKNMMAASDFRNGRYLTCSAIFRGKVSMKEVEDQMRNVQNKNSSYFVEWIPNNVQTALCSIPPRGLKMSSTFVGNSTAIQELFKRIGEQFTAMFRRKAFLHWYTGEGMDEMEFTEAESNMNDLVSEYQQYQDAGVDEEEEEYEEEAPLEGEE.

GTP is bound by residues Q11, E69, S138, G142, T143, G144, N204, and N226. Mg(2+) is bound at residue E69. Positions 424-447 are disordered; sequence QYQDAGVDEEEEEYEEEAPLEGEE. The span at 429-447 shows a compositional bias: acidic residues; it reads GVDEEEEEYEEEAPLEGEE.

It belongs to the tubulin family. In terms of assembly, dimer of alpha and beta chains. A typical microtubule is a hollow water-filled tube with an outer diameter of 25 nm and an inner diameter of 15 nM. Alpha-beta heterodimers associate head-to-tail to form protofilaments running lengthwise along the microtubule wall with the beta-tubulin subunit facing the microtubule plus end conferring a structural polarity. Microtubules usually have 13 protofilaments but different protofilament numbers can be found in some organisms and specialized cells. Requires Mg(2+) as cofactor.

It is found in the cytoplasm. The protein localises to the cytoskeleton. Its function is as follows. Tubulin is the major constituent of microtubules, a cylinder consisting of laterally associated linear protofilaments composed of alpha- and beta-tubulin heterodimers. Microtubules grow by the addition of GTP-tubulin dimers to the microtubule end, where a stabilizing cap forms. Below the cap, tubulin dimers are in GDP-bound state, owing to GTPase activity of alpha-tubulin. In Neurospora crassa (strain ATCC 24698 / 74-OR23-1A / CBS 708.71 / DSM 1257 / FGSC 987), this protein is Tubulin beta chain (tub-2).